The chain runs to 119 residues: Large ribosomal subunit protein bL20 (119 aa).

Belongs to the bacterial ribosomal protein bL20 family.

Its function is as follows. Binds directly to 23S ribosomal RNA and is necessary for the in vitro assembly process of the 50S ribosomal subunit. It is not involved in the protein synthesizing functions of that subunit. The chain is Large ribosomal subunit protein bL20 from Nitrosomonas eutropha (strain DSM 101675 / C91 / Nm57).